A 451-amino-acid polypeptide reads, in one-letter code: Bifunctional protein GlmU (451 aa).

Residues 1-229 form a pyrophosphorylase region; it reads MQRNAVILAA…FNEIMGVNDR (229 aa). Residues 8–11, Lys22, Gln72, and 77–78 each bind UDP-N-acetyl-alpha-D-glucosamine; these read LAAG and GT. Residue Asp102 coordinates Mg(2+). Residues Gly139, Glu154, and Asn227 each contribute to the UDP-N-acetyl-alpha-D-glucosamine site. Asn227 is a binding site for Mg(2+). The interval 230–250 is linker; the sequence is VMLSNAEKALQQRINIEHMRN. The interval 251–451 is N-acetyltransferase; the sequence is GVTIIDPTTT…QITKEGYLKK (201 aa). Positions 332 and 350 each coordinate UDP-N-acetyl-alpha-D-glucosamine. His362 serves as the catalytic Proton acceptor. The UDP-N-acetyl-alpha-D-glucosamine site is built by Tyr365 and Asn376. Acetyl-CoA-binding positions include 385-386, Ala422, and Arg439; that span reads NY.

The protein in the N-terminal section; belongs to the N-acetylglucosamine-1-phosphate uridyltransferase family. It in the C-terminal section; belongs to the transferase hexapeptide repeat family. In terms of assembly, homotrimer. The cofactor is Mg(2+).

The protein localises to the cytoplasm. The enzyme catalyses alpha-D-glucosamine 1-phosphate + acetyl-CoA = N-acetyl-alpha-D-glucosamine 1-phosphate + CoA + H(+). It carries out the reaction N-acetyl-alpha-D-glucosamine 1-phosphate + UTP + H(+) = UDP-N-acetyl-alpha-D-glucosamine + diphosphate. The protein operates within nucleotide-sugar biosynthesis; UDP-N-acetyl-alpha-D-glucosamine biosynthesis; N-acetyl-alpha-D-glucosamine 1-phosphate from alpha-D-glucosamine 6-phosphate (route II): step 2/2. It functions in the pathway nucleotide-sugar biosynthesis; UDP-N-acetyl-alpha-D-glucosamine biosynthesis; UDP-N-acetyl-alpha-D-glucosamine from N-acetyl-alpha-D-glucosamine 1-phosphate: step 1/1. Its pathway is bacterial outer membrane biogenesis; LPS lipid A biosynthesis. In terms of biological role, catalyzes the last two sequential reactions in the de novo biosynthetic pathway for UDP-N-acetylglucosamine (UDP-GlcNAc). The C-terminal domain catalyzes the transfer of acetyl group from acetyl coenzyme A to glucosamine-1-phosphate (GlcN-1-P) to produce N-acetylglucosamine-1-phosphate (GlcNAc-1-P), which is converted into UDP-GlcNAc by the transfer of uridine 5-monophosphate (from uridine 5-triphosphate), a reaction catalyzed by the N-terminal domain. In Staphylococcus haemolyticus (strain JCSC1435), this protein is Bifunctional protein GlmU.